A 242-amino-acid polypeptide reads, in one-letter code: ATP synthase subunit a (242 aa).

6 helical membrane-spanning segments follow: residues 29-49 (SSIY…LAFY), 84-104 (FIPL…LGMT), 114-134 (IIVT…VGFV), 140-160 (FLTL…MIVI), 181-201 (MAGH…MIYL), and 203-223 (FLPI…AILQ).

It belongs to the ATPase A chain family. F-type ATPases have 2 components, CF(1) - the catalytic core - and CF(0) - the membrane proton channel. CF(1) has five subunits: alpha(3), beta(3), gamma(1), delta(1), epsilon(1). CF(0) has three main subunits: a(1), b(2) and c(9-12). The alpha and beta chains form an alternating ring which encloses part of the gamma chain. CF(1) is attached to CF(0) by a central stalk formed by the gamma and epsilon chains, while a peripheral stalk is formed by the delta and b chains.

It localises to the cell inner membrane. Functionally, key component of the proton channel; it plays a direct role in the translocation of protons across the membrane. The protein is ATP synthase subunit a of Rickettsia akari (strain Hartford).